Here is a 348-residue protein sequence, read N- to C-terminus: Phosphoribosylformylglycinamidine cyclo-ligase (348 aa).

This sequence belongs to the AIR synthase family.

It localises to the cytoplasm. It carries out the reaction 2-formamido-N(1)-(5-O-phospho-beta-D-ribosyl)acetamidine + ATP = 5-amino-1-(5-phospho-beta-D-ribosyl)imidazole + ADP + phosphate + H(+). The protein operates within purine metabolism; IMP biosynthesis via de novo pathway; 5-amino-1-(5-phospho-D-ribosyl)imidazole from N(2)-formyl-N(1)-(5-phospho-D-ribosyl)glycinamide: step 2/2. This is Phosphoribosylformylglycinamidine cyclo-ligase from Roseobacter denitrificans (strain ATCC 33942 / OCh 114) (Erythrobacter sp. (strain OCh 114)).